The following is a 111-amino-acid chain: Integration host factor subunit alpha (111 aa).

Belongs to the bacterial histone-like protein family. As to quaternary structure, heterodimer of an alpha and a beta chain.

In terms of biological role, this protein is one of the two subunits of integration host factor, a specific DNA-binding protein that functions in genetic recombination as well as in transcriptional and translational control. This is Integration host factor subunit alpha from Polaromonas sp. (strain JS666 / ATCC BAA-500).